The following is a 267-amino-acid chain: uncharacterized protein (267 aa).

The 232-residue stretch at 17-248 (LKVENLTKIF…PRDRTSIEFL (232 aa)) folds into the ABC transporter domain. 53–60 (GPSGCGKT) serves as a coordination point for ATP.

It belongs to the ABC transporter superfamily.

This is an uncharacterized protein from Methanocaldococcus jannaschii (strain ATCC 43067 / DSM 2661 / JAL-1 / JCM 10045 / NBRC 100440) (Methanococcus jannaschii).